Reading from the N-terminus, the 227-residue chain is MALPFQLGFQDATSPIMEELLHFHDHTLMIVFMISSLVLYLISSMLTTRLTHTSTMDAQEVETIWTILPAIILITIALPSLRILYMMDEINNPSMTIKTMGHQWYWSYEYTDYSELCFDSYMIPTSDLKSGGLRLLEVDNRVVIPMEMTVRMLISSEDVLHSWAVPSLGLKTDAIPGRLNQTTLLSTRPGLYYGQCSEICGSNHSFMPIVLEMVTLNCFEKWSTSML.

Residues 1-14 (MALPFQLGFQDATS) lie on the Mitochondrial intermembrane side of the membrane. The chain crosses the membrane as a helical span at residues 15-45 (PIMEELLHFHDHTLMIVFMISSLVLYLISSM). Topologically, residues 46-59 (LTTRLTHTSTMDAQ) are mitochondrial matrix. Residues 60–87 (EVETIWTILPAIILITIALPSLRILYMM) form a helical membrane-spanning segment. Topologically, residues 88-227 (DEINNPSMTI…CFEKWSTSML (140 aa)) are mitochondrial intermembrane. Positions 161, 196, 198, 200, 204, and 207 each coordinate Cu cation. Glu-198 is a binding site for Mg(2+).

This sequence belongs to the cytochrome c oxidase subunit 2 family. In terms of assembly, component of the cytochrome c oxidase (complex IV, CIV), a multisubunit enzyme composed of 14 subunits. The complex is composed of a catalytic core of 3 subunits MT-CO1, MT-CO2 and MT-CO3, encoded in the mitochondrial DNA, and 11 supernumerary subunits COX4I, COX5A, COX5B, COX6A, COX6B, COX6C, COX7A, COX7B, COX7C, COX8 and NDUFA4, which are encoded in the nuclear genome. The complex exists as a monomer or a dimer and forms supercomplexes (SCs) in the inner mitochondrial membrane with NADH-ubiquinone oxidoreductase (complex I, CI) and ubiquinol-cytochrome c oxidoreductase (cytochrome b-c1 complex, complex III, CIII), resulting in different assemblies (supercomplex SCI(1)III(2)IV(1) and megacomplex MCI(2)III(2)IV(2)). Found in a complex with TMEM177, COA6, COX18, COX20, SCO1 and SCO2. Interacts with TMEM177 in a COX20-dependent manner. Interacts with COX20. Interacts with COX16. Requires Cu cation as cofactor.

It localises to the mitochondrion inner membrane. The catalysed reaction is 4 Fe(II)-[cytochrome c] + O2 + 8 H(+)(in) = 4 Fe(III)-[cytochrome c] + 2 H2O + 4 H(+)(out). In terms of biological role, component of the cytochrome c oxidase, the last enzyme in the mitochondrial electron transport chain which drives oxidative phosphorylation. The respiratory chain contains 3 multisubunit complexes succinate dehydrogenase (complex II, CII), ubiquinol-cytochrome c oxidoreductase (cytochrome b-c1 complex, complex III, CIII) and cytochrome c oxidase (complex IV, CIV), that cooperate to transfer electrons derived from NADH and succinate to molecular oxygen, creating an electrochemical gradient over the inner membrane that drives transmembrane transport and the ATP synthase. Cytochrome c oxidase is the component of the respiratory chain that catalyzes the reduction of oxygen to water. Electrons originating from reduced cytochrome c in the intermembrane space (IMS) are transferred via the dinuclear copper A center (CU(A)) of subunit 2 and heme A of subunit 1 to the active site in subunit 1, a binuclear center (BNC) formed by heme A3 and copper B (CU(B)). The BNC reduces molecular oxygen to 2 water molecules using 4 electrons from cytochrome c in the IMS and 4 protons from the mitochondrial matrix. The sequence is that of Cytochrome c oxidase subunit 2 (MT-CO2) from Phyllostomus hastatus (Greater spear-nosed bat).